Here is a 539-residue protein sequence, read N- to C-terminus: MLLPLACLHGRVAQCLTSLLVLAEPFPRPRRGAKARGAAPTSAEPAPAVAKMAAELYPPASPSAATATDIANSNAAGAAESTKVGLCCPPCLAPAPLPPLPAPPLPDNNNPESPNWQSFHPTLRERNALMFNNELMADVHFIVGALGAARRVPAHKYVLAVGSSVFYAMFYGDLAEVKSEIHIPDVEPAAFLVLLKYMYSDEIDLEADTVLATLYAAKKYIVPALAKACVNFLETSLEAKNACVLLSQSRLFEEPELTQRCWEVIDAQAEMALRSEGFCEIDRQTLEIIVTREALNTKEAVVFEAVLNWAEAECKRQGLPVTPHNKRHVLGRALYLVRIPTMTLEEFANGAAQSDILTLEETHNIFLWYTAAKKPLLDFPLTKRKGLAPQRCHRFQSSAYRSNQWRYRGRCDSIQFAVDRRVFIAGLGLYGSSSGKAEYSVKIELKRLGMVLAQNLTKFVSDGSSNTFPVWFEHPVQVEQDTFYTASAVLDGSELSYFGQEGMTEVQCGKVAFQFQCSSDSTNGTGVQGGQIPELIFYA.

A signal peptide spans 1–23 (MLLPLACLHGRVAQCLTSLLVLA). One can recognise a BTB domain in the interval 137–207 (ADVHFIVGAL…MYSDEIDLEA (71 aa)).

It is found in the cytoplasm. Adapter protein for the cul3 E3 ubiquitin-protein ligase complex. Involved in late neuronal development and muscle formation. The sequence is that of BTB/POZ domain-containing protein 6 (Btbd6) from Mus musculus (Mouse).